Reading from the N-terminus, the 107-residue chain is SOSS complex subunit C (107 aa).

The protein belongs to the SOSS-C family. As to quaternary structure, belongs to the multiprotein complex Integrator. Component of the SOSS complex, composed of soss-b (soss-b1/nabp2 or soss-b2/nabp1), soss-a/ints3 and soss-c/inip.

The protein localises to the nucleus. Component of the SOSS complex, a multiprotein complex that functions downstream of the MRN complex to promote DNA repair and G2/M checkpoint. The SOSS complex associates with single-stranded DNA at DNA lesions and influences diverse endpoints in the cellular DNA damage response including cell-cycle checkpoint activation, recombinational repair and maintenance of genomic stability. Required for efficient homologous recombination-dependent repair of double-strand breaks (DSBs). The sequence is that of SOSS complex subunit C (inip) from Salmo salar (Atlantic salmon).